Consider the following 173-residue polypeptide: Crossover junction endodeoxyribonuclease RuvC (173 aa).

Active-site residues include Asp8, Glu67, and Asp139. Asp8, Glu67, and Asp139 together coordinate Mg(2+).

The protein belongs to the RuvC family. Homodimer which binds Holliday junction (HJ) DNA. The HJ becomes 2-fold symmetrical on binding to RuvC with unstacked arms; it has a different conformation from HJ DNA in complex with RuvA. In the full resolvosome a probable DNA-RuvA(4)-RuvB(12)-RuvC(2) complex forms which resolves the HJ. Requires Mg(2+) as cofactor.

Its subcellular location is the cytoplasm. The enzyme catalyses Endonucleolytic cleavage at a junction such as a reciprocal single-stranded crossover between two homologous DNA duplexes (Holliday junction).. In terms of biological role, the RuvA-RuvB-RuvC complex processes Holliday junction (HJ) DNA during genetic recombination and DNA repair. Endonuclease that resolves HJ intermediates. Cleaves cruciform DNA by making single-stranded nicks across the HJ at symmetrical positions within the homologous arms, yielding a 5'-phosphate and a 3'-hydroxyl group; requires a central core of homology in the junction. The consensus cleavage sequence is 5'-(A/T)TT(C/G)-3'. Cleavage occurs on the 3'-side of the TT dinucleotide at the point of strand exchange. HJ branch migration catalyzed by RuvA-RuvB allows RuvC to scan DNA until it finds its consensus sequence, where it cleaves and resolves the cruciform DNA. This chain is Crossover junction endodeoxyribonuclease RuvC, found in Shewanella woodyi (strain ATCC 51908 / MS32).